A 789-amino-acid polypeptide reads, in one-letter code: MEKNKQALLLQAIEDVFAFSFSKYAKYIIQDRALPDLRDGLKPVQRRILYGMYQMGLKPTSPYKKSARAVGEIMGKYHPHGDASIYDAIVRMSQAWKNNLTTISIHGNNGSIDGDNAAAMRYTEARLSPYGFELLKDIEKQLVPFVNNFDDSEVEPSVLPTLLPNLFINGTSGIAAGYATNIAPHNVGELLDGLSYRIENPDCDLKAILKIVKGPDFPTGGLVYFEQELANIYQTGKGKFVIQAKYETNTAFGQNQIVITEIPYETVKANIVKQIEELISDNKLSALESVIDSSDRSGIRIIINHKDFLSADKIMAFLFKHTQLQVNFNLNNTVIANRCPVRVGLLAYFDQFLAFAHELIINSAKYDLALANKRLEIIKGLIKAVSMIDEIIRLIRRATDKQDAKTKLIDKYAFTLNQAEAIVSLRLYQLTNTDIKVLFAEQKELEQTIQTAERLIAKPQARNQLLQAQFFQYKKQFNQPRRAQIVGLIEKQKVQDSDFIEHKEVGLLISHDGIYFKFEPEQLAKHLVEFKSEQDQLIFGGVVQNSDYFFMVTSLGNIITVPIYKTLSNTKTKMNELLAKKPILMEDEKLVLAGIVNPDKMEQQLLVLTSQCGMVKRVELSKVINTKQIKSSCCMALRERDKLVNAFVQTKGEPKLVCLVSSSNSFATFLAEEIPIISNKGIGVKGIKLKAEEKVRFAMPLQDNDALVVINSDGGVYNFEVVELAVASRMSVGKKLIPKTKTPVSCFAANKHSEIIGHRGKNGSDLFTLNELNRLPKSTVSQMRLFKWS.

The 466-residue stretch at 34–499 folds into the Topo IIA-type catalytic domain; it reads LPDLRDGLKP…EKQKVQDSDF (466 aa). Tyrosine 122 serves as the catalytic O-(5'-phospho-DNA)-tyrosine intermediate.

Belongs to the type II topoisomerase GyrA/ParC subunit family. ParC type 2 subfamily. Heterotetramer composed of ParC and ParE.

The protein resides in the cell membrane. The enzyme catalyses ATP-dependent breakage, passage and rejoining of double-stranded DNA.. Topoisomerase IV is essential for chromosome segregation. It relaxes supercoiled DNA. Performs the decatenation events required during the replication of a circular DNA molecule. In Mycoplasma pneumoniae (strain ATCC 29342 / M129 / Subtype 1) (Mycoplasmoides pneumoniae), this protein is DNA topoisomerase 4 subunit A.